The chain runs to 128 residues: Flagellar hook-basal body complex protein FliE (128 aa).

The tract at residues Met-1 to Gly-60 is disordered. Residues Arg-33–Ser-55 are compositionally biased toward polar residues.

Belongs to the FliE family.

It localises to the bacterial flagellum basal body. In Rhodopirellula baltica (strain DSM 10527 / NCIMB 13988 / SH1), this protein is Flagellar hook-basal body complex protein FliE.